The primary structure comprises 107 residues: Small ribosomal subunit protein uS17 (107 aa).

The protein belongs to the universal ribosomal protein uS17 family. In terms of assembly, part of the 30S ribosomal subunit.

Its function is as follows. One of the primary rRNA binding proteins, it binds specifically to the 5'-end of 16S ribosomal RNA. The protein is Small ribosomal subunit protein uS17 of Thermotoga sp. (strain RQ2).